Here is a 139-residue protein sequence, read N- to C-terminus: Nucleoside diphosphate kinase (139 aa).

The ATP site is built by lysine 10, phenylalanine 58, arginine 86, threonine 92, arginine 103, and asparagine 113. The Pros-phosphohistidine intermediate role is filled by histidine 116.

It belongs to the NDK family. In terms of assembly, homotetramer. The cofactor is Mg(2+).

The protein resides in the cytoplasm. The catalysed reaction is a 2'-deoxyribonucleoside 5'-diphosphate + ATP = a 2'-deoxyribonucleoside 5'-triphosphate + ADP. The enzyme catalyses a ribonucleoside 5'-diphosphate + ATP = a ribonucleoside 5'-triphosphate + ADP. Functionally, major role in the synthesis of nucleoside triphosphates other than ATP. The ATP gamma phosphate is transferred to the NDP beta phosphate via a ping-pong mechanism, using a phosphorylated active-site intermediate. This is Nucleoside diphosphate kinase from Phenylobacterium zucineum (strain HLK1).